Here is a 337-residue protein sequence, read N- to C-terminus: Biotin synthase (337 aa).

The Radical SAM core domain occupies 55-284 (YFKNTIELCS…KKTILLAGGK (230 aa)). 3 residues coordinate [4Fe-4S] cluster: Cys73, Cys77, and Cys80. Cys117, Cys149, and Cys209 together coordinate [2Fe-2S] cluster.

The protein belongs to the radical SAM superfamily. Biotin synthase family. In terms of assembly, homodimer. Requires [4Fe-4S] cluster as cofactor. The cofactor is [2Fe-2S] cluster.

It catalyses the reaction (4R,5S)-dethiobiotin + (sulfur carrier)-SH + 2 reduced [2Fe-2S]-[ferredoxin] + 2 S-adenosyl-L-methionine = (sulfur carrier)-H + biotin + 2 5'-deoxyadenosine + 2 L-methionine + 2 oxidized [2Fe-2S]-[ferredoxin]. The protein operates within cofactor biosynthesis; biotin biosynthesis; biotin from 7,8-diaminononanoate: step 2/2. Catalyzes the conversion of dethiobiotin (DTB) to biotin by the insertion of a sulfur atom into dethiobiotin via a radical-based mechanism. The polypeptide is Biotin synthase (Caldicellulosiruptor bescii (strain ATCC BAA-1888 / DSM 6725 / KCTC 15123 / Z-1320) (Anaerocellum thermophilum)).